Reading from the N-terminus, the 314-residue chain is DNA-directed RNA polymerase subunit alpha (314 aa).

Residues 1-228 (MIEIEKPKIE…EHLNIFVGLT (228 aa)) form an alpha N-terminal domain (alpha-NTD) region. Residues 245-314 (KEKVLEMTIE…ELGLSLRKDD (70 aa)) form an alpha C-terminal domain (alpha-CTD) region.

This sequence belongs to the RNA polymerase alpha chain family. In terms of assembly, homodimer. The RNAP catalytic core consists of 2 alpha, 1 beta, 1 beta' and 1 omega subunit. When a sigma factor is associated with the core the holoenzyme is formed, which can initiate transcription.

It carries out the reaction RNA(n) + a ribonucleoside 5'-triphosphate = RNA(n+1) + diphosphate. Functionally, DNA-dependent RNA polymerase catalyzes the transcription of DNA into RNA using the four ribonucleoside triphosphates as substrates. The sequence is that of DNA-directed RNA polymerase subunit alpha from Geobacillus thermodenitrificans (strain NG80-2).